A 290-amino-acid chain; its full sequence is 33 kDa chaperonin (290 aa).

2 disulfides stabilise this stretch: cysteine 235-cysteine 237 and cysteine 268-cysteine 271.

This sequence belongs to the HSP33 family. Post-translationally, under oxidizing conditions two disulfide bonds are formed involving the reactive cysteines. Under reducing conditions zinc is bound to the reactive cysteines and the protein is inactive.

Its subcellular location is the cytoplasm. Functionally, redox regulated molecular chaperone. Protects both thermally unfolding and oxidatively damaged proteins from irreversible aggregation. Plays an important role in the bacterial defense system toward oxidative stress. In Streptococcus pyogenes serotype M5 (strain Manfredo), this protein is 33 kDa chaperonin.